The sequence spans 100 residues: Small ribosomal subunit protein uS14c (100 aa).

Belongs to the universal ribosomal protein uS14 family. As to quaternary structure, part of the 30S ribosomal subunit.

It is found in the plastid. Its subcellular location is the chloroplast. In terms of biological role, binds 16S rRNA, required for the assembly of 30S particles. This is Small ribosomal subunit protein uS14c from Lotus japonicus (Lotus corniculatus var. japonicus).